A 577-amino-acid polypeptide reads, in one-letter code: BICD family-like cargo adapter 1 (577 aa).

The disordered stretch occupies residues 63–100; that stretch reads LLAAGERSSEPGEHPQAEPESPVEGHGPPLPPPPTQDP. Over residues 69–79 the composition is skewed to basic and acidic residues; that stretch reads RSSEPGEHPQA. Positions 116 to 120 match the CC1 box motif; the sequence is AARLG. The stretch at 121-379 forms a coiled coil; that stretch reads KALLERNQDM…QLWEAYCQVR (259 aa). The disordered stretch occupies residues 389–415; that stretch reads DSADSAVSTDSSMDESSETSSAKDVPA. Residues 390–399 show a composition bias toward low complexity; it reads SADSAVSTDS. Residues 443–528 are a coiled coil; that stretch reads LSVEMTALKE…LEAWQDDMHR (86 aa).

Belongs to the BICDR family. As to quaternary structure, part of a tripartite complex with dynein and dynactin, acts an adapter linking the dynein motor complex and dynactin. Interacts with KIF1C. Interacts with RAB6A and RAB6B; interaction is specific to Rab6. In terms of tissue distribution, highly expressed during early embryonic development. Predominantly expressed in kidney, undifferentiated neural tissue and developing eye.

The protein resides in the cytoplasm. The protein localises to the cytoskeleton. Its subcellular location is the microtubule organizing center. It localises to the centrosome. Acts as an adapter protein linking the dynein motor complex to various cargos and converts dynein from a non-processive to a highly processive motor in the presence of dynactin. Facilitates the interaction between dynein and dynactin and activates dynein processivity (the ability to move along a microtubule for a long distance without falling off the track). Predominantly recruits 2 dyneins, which increases both the force and speed of the microtubule motor. Component of secretory vesicle machinery in developing neurons that acts as a regulator of neurite outgrowth. Regulates the secretory vesicle transport by controlling the accumulation of Rab6-containing secretory vesicles in the pericentrosomal region restricting anterograde secretory transport during the early phase of neuronal differentiation, thereby inhibiting neuritogenesis. In Mus musculus (Mouse), this protein is BICD family-like cargo adapter 1 (Bicdl1).